The sequence spans 373 residues: Muscleblind-like protein 2 (373 aa).

4 C3H1-type zinc fingers span residues 13 to 41 (WLTLEVCRQFQRGTCSRSDEECKFAHPPK), 47 to 73 (NGRVIACFDSLKGRCSRENCKYLHPPT), 176 to 204 (TDKLEVCREFQRGNCARGETDCRFAHPAD), and 212 to 238 (DNTVTVCMDYIKGRCMREKCKYFHPPA).

The protein belongs to the muscleblind family. In terms of assembly, interacts with ITGA3. Expressed in heart, brain, placenta, lung, liver, skeletal muscle, kidney and pancreas.

Its subcellular location is the nucleus. The protein localises to the cytoplasm. Its function is as follows. Mediates pre-mRNA alternative splicing regulation. Acts either as activator or repressor of splicing on specific pre-mRNA targets. Inhibits cardiac troponin-T (TNNT2) pre-mRNA exon inclusion but induces insulin receptor (IR) pre-mRNA exon inclusion in muscle. Antagonizes the alternative splicing activity pattern of CELF proteins. RNA-binding protein that binds to 5'ACACCC-3' core sequence, termed zipcode, within the 3'UTR of ITGA3. Binds to CUG triplet repeat expansion in myotonic dystrophy muscle cells by sequestering the target RNAs. Together with RNA binding proteins RBPMS and RBFOX2, activates vascular smooth muscle cells alternative splicing events. Regulates NCOR2 alternative splicing. Seems to regulate expression and localization of ITGA3 by transporting it from the nucleus to cytoplasm at adhesion plaques. May play a role in myotonic dystrophy pathophysiology (DM). The chain is Muscleblind-like protein 2 (MBNL2) from Homo sapiens (Human).